The sequence spans 79 residues: Large ribosomal subunit protein uL22 (79 aa).

The protein belongs to the universal ribosomal protein uL22 family. Part of the 50S ribosomal subunit.

In terms of biological role, this protein binds specifically to 23S rRNA; its binding is stimulated by other ribosomal proteins, e.g. L4, L17, and L20. It is important during the early stages of 50S assembly. It makes multiple contacts with different domains of the 23S rRNA in the assembled 50S subunit and ribosome. Functionally, the globular domain of the protein is located near the polypeptide exit tunnel on the outside of the subunit, while an extended beta-hairpin is found that lines the wall of the exit tunnel in the center of the 70S ribosome. The chain is Large ribosomal subunit protein uL22 (rplV) from Clover proliferation phytoplasma.